The primary structure comprises 175 residues: Transcriptional activatory protein BadR (175 aa).

The HTH marR-type domain occupies 20 to 156; it reads ANRLFFRLYQ…TLHYLLKILD (137 aa).

Functionally, transcriptional activator of genes for the anaerobic degradation of benzoate. The polypeptide is Transcriptional activatory protein BadR (badR) (Rhodopseudomonas palustris (strain ATCC BAA-98 / CGA009)).